The chain runs to 454 residues: Bifunctional protein GlmU (454 aa).

Residues 1 to 227 (MSKLSVVILA…MMEVEGANNR (227 aa)) are pyrophosphorylase. UDP-N-acetyl-alpha-D-glucosamine is bound by residues 9–12 (LAAG), Lys23, Gln74, 79–80 (GT), 101–103 (YGD), Gly138, Glu152, Asn167, and Asn225. Asp103 contacts Mg(2+). Asn225 is a Mg(2+) binding site. A linker region spans residues 228–248 (LQLAALERYFQRKQATALLLA). Positions 249–454 (GVSLADPERF…ADWERPSKKK (206 aa)) are N-acetyltransferase. 2 residues coordinate UDP-N-acetyl-alpha-D-glucosamine: Arg331 and Lys349. His361 (proton acceptor) is an active-site residue. Residues Tyr364 and Asn375 each coordinate UDP-N-acetyl-alpha-D-glucosamine. Residues Ala378, 384–385 (NY), Ser403, Ala421, and Arg438 contribute to the acetyl-CoA site.

The protein in the N-terminal section; belongs to the N-acetylglucosamine-1-phosphate uridyltransferase family. This sequence in the C-terminal section; belongs to the transferase hexapeptide repeat family. In terms of assembly, homotrimer. Mg(2+) is required as a cofactor.

It is found in the cytoplasm. It carries out the reaction alpha-D-glucosamine 1-phosphate + acetyl-CoA = N-acetyl-alpha-D-glucosamine 1-phosphate + CoA + H(+). The enzyme catalyses N-acetyl-alpha-D-glucosamine 1-phosphate + UTP + H(+) = UDP-N-acetyl-alpha-D-glucosamine + diphosphate. Its pathway is nucleotide-sugar biosynthesis; UDP-N-acetyl-alpha-D-glucosamine biosynthesis; N-acetyl-alpha-D-glucosamine 1-phosphate from alpha-D-glucosamine 6-phosphate (route II): step 2/2. The protein operates within nucleotide-sugar biosynthesis; UDP-N-acetyl-alpha-D-glucosamine biosynthesis; UDP-N-acetyl-alpha-D-glucosamine from N-acetyl-alpha-D-glucosamine 1-phosphate: step 1/1. It participates in bacterial outer membrane biogenesis; LPS lipid A biosynthesis. Functionally, catalyzes the last two sequential reactions in the de novo biosynthetic pathway for UDP-N-acetylglucosamine (UDP-GlcNAc). The C-terminal domain catalyzes the transfer of acetyl group from acetyl coenzyme A to glucosamine-1-phosphate (GlcN-1-P) to produce N-acetylglucosamine-1-phosphate (GlcNAc-1-P), which is converted into UDP-GlcNAc by the transfer of uridine 5-monophosphate (from uridine 5-triphosphate), a reaction catalyzed by the N-terminal domain. In Actinobacillus succinogenes (strain ATCC 55618 / DSM 22257 / CCUG 43843 / 130Z), this protein is Bifunctional protein GlmU.